The sequence spans 413 residues: Probable short/branched chain specific acyl-CoA dehydrogenase (413 aa).

Residues F152 to S161 and W186 to T188 each bind FAD. Residue S161 participates in substrate binding. Residues Y208, Y262, and N270–R273 contribute to the substrate site. FAD contacts are provided by residues R298, Q309, and S366 to G370. The active-site Proton acceptor is E393. T395 to N397 contributes to the FAD binding site.

This sequence belongs to the acyl-CoA dehydrogenase family. In terms of assembly, homotetramer. FAD serves as cofactor.

The enzyme catalyses 2-methylbutanoyl-CoA + oxidized [electron-transfer flavoprotein] + H(+) = (2E)-2-methylbut-2-enoyl-CoA + reduced [electron-transfer flavoprotein]. It functions in the pathway lipid metabolism; mitochondrial fatty acid beta-oxidation. Its pathway is amino-acid degradation; L-isoleucine degradation. Probable short and branched chain specific acyl-CoA dehydrogenase that catalyzes the removal of one hydrogen from C-2 and C-3 of the fatty acyl-CoA thioester, resulting in the formation of trans-2-enoyl-CoA. This chain is Probable short/branched chain specific acyl-CoA dehydrogenase (acadsb), found in Dictyostelium discoideum (Social amoeba).